A 141-amino-acid polypeptide reads, in one-letter code: Small ribosomal subunit protein bS6 (141 aa).

The disordered stretch occupies residues 97–141; sequence TGQSEMLKAEENRSERRERRDRPEHSDSADGDDGDNSDVSDNADE. Residues 103–124 are compositionally biased toward basic and acidic residues; sequence LKAEENRSERRERRDRPEHSDS. A compositionally biased stretch (acidic residues) spans 125-141; the sequence is ADGDDGDNSDVSDNADE.

This sequence belongs to the bacterial ribosomal protein bS6 family.

In terms of biological role, binds together with bS18 to 16S ribosomal RNA. The sequence is that of Small ribosomal subunit protein bS6 from Pseudomonas syringae pv. syringae (strain B728a).